Consider the following 155-residue polypeptide: Ribosomal RNA large subunit methyltransferase H (155 aa).

Residues leucine 72, glycine 103, and 122–127 (LSALTL) each bind S-adenosyl-L-methionine.

Belongs to the RNA methyltransferase RlmH family. In terms of assembly, homodimer.

The protein localises to the cytoplasm. The catalysed reaction is pseudouridine(1915) in 23S rRNA + S-adenosyl-L-methionine = N(3)-methylpseudouridine(1915) in 23S rRNA + S-adenosyl-L-homocysteine + H(+). In terms of biological role, specifically methylates the pseudouridine at position 1915 (m3Psi1915) in 23S rRNA. This Enterobacter sp. (strain 638) protein is Ribosomal RNA large subunit methyltransferase H.